The following is a 695-amino-acid chain: Frizzled and smoothened-like protein O (695 aa).

Positions methionine 1–serine 23 are cleaved as a signal peptide. Over glutamine 24–glutamate 233 the chain is Extracellular. Residues aspartate 28–proline 173 enclose the FZ domain. 5 disulfides stabilise this stretch: cysteine 33-cysteine 96, cysteine 42-cysteine 89, cysteine 80-cysteine 125, cysteine 114-cysteine 170, and cysteine 118-cysteine 138. Residue asparagine 47 is glycosylated (N-linked (GlcNAc...) asparagine). N-linked (GlcNAc...) asparagine glycans are attached at residues asparagine 137 and asparagine 178. A helical membrane pass occupies residues alanine 234–phenylalanine 254. Over proline 255–asparagine 262 the chain is Cytoplasmic. The helical transmembrane segment at tryptophan 263–glutamate 283 threads the bilayer. The Extracellular portion of the chain corresponds to alanine 284–threonine 307. A helical membrane pass occupies residues cysteine 308–leucine 328. Over tyrosine 329 to lysine 343 the chain is Cytoplasmic. A helical membrane pass occupies residues tyrosine 344–isoleucine 364. Residues lysine 365–glutamine 387 are Extracellular-facing. Residues tyrosine 388 to threonine 408 form a helical membrane-spanning segment. The Cytoplasmic segment spans residues serine 409–serine 435. A helical membrane pass occupies residues isoleucine 436–valine 456. Residues threonine 457–alanine 500 lie on the Extracellular side of the membrane. A helical transmembrane segment spans residues isoleucine 501–leucine 521. The Cytoplasmic portion of the chain corresponds to glutamine 522–valine 695. A compositionally biased stretch (polar residues) spans serine 545 to aspartate 556. Positions serine 545–valine 695 are disordered. Low complexity predominate over residues asparagine 593–serine 608. Positions threonine 609–serine 625 are enriched in polar residues. Over residues asparagine 626–asparagine 686 the composition is skewed to low complexity. A coiled-coil region spans residues asparagine 653–asparagine 691.

This sequence belongs to the G-protein coupled receptor Fz/Smo family.

The protein localises to the membrane. The polypeptide is Frizzled and smoothened-like protein O (fslO) (Dictyostelium discoideum (Social amoeba)).